Consider the following 306-residue polypeptide: Putative syntaxin-3 (306 aa).

Topologically, residues 1 to 279 (MPRDRLKELQ…QKRARKMKVC (279 aa)) are cytoplasmic. Positions 40–180 (QDADFEMFLE…QLSDEEIENA (141 aa)) are required for the regulation of the defecation motor program. Residues 204 to 266 (YDEVKSRADE…KQARGNVEEA (63 aa)) enclose the t-SNARE coiled-coil homology domain. A helical; Anchor for type IV membrane protein membrane pass occupies residues 280–300 (IIIGSIIAVLILILFIQSAVC). Over 301-306 (HFTPIC) the chain is Extracellular.

It belongs to the syntaxin family. Expressed in body wall, pharyngeal, vulval and enteric muscles and in some head neurons.

The protein localises to the cell membrane. Functionally, potentially involved in docking of synaptic vesicles at presynaptic active zones. Acts in the intestine to regulate anterior body muscle contractions (aBOC) and the expulsion steps during the defecation motor program (DMP). The sequence is that of Putative syntaxin-3 from Caenorhabditis elegans.